Consider the following 390-residue polypeptide: Elongation factor Tu 2 (390 aa).

The tr-type G domain maps to 10 to 201 (KPHVNVGTIG…LDEYVAVPPR (192 aa)). The interval 19–26 (GHVDHGKT) is G1. 19-26 (GHVDHGKT) contacts GTP. Thr26 is a Mg(2+) binding site. Positions 55–59 (GITIA) are G2. Positions 76–79 (DCPG) are G3. GTP contacts are provided by residues 76-80 (DCPGH) and 131-134 (NKAD). The segment at 131 to 134 (NKAD) is G4. The interval 168-170 (SAL) is G5.

It belongs to the TRAFAC class translation factor GTPase superfamily. Classic translation factor GTPase family. EF-Tu/EF-1A subfamily. Monomer.

The protein resides in the cytoplasm. It carries out the reaction GTP + H2O = GDP + phosphate + H(+). Functionally, GTP hydrolase that promotes the GTP-dependent binding of aminoacyl-tRNA to the A-site of ribosomes during protein biosynthesis. This is Elongation factor Tu 2 from Wolbachia pipientis wMel.